The chain runs to 444 residues: Glutamyl-tRNA reductase (444 aa).

Residues 49–52, S109, 114–116, and Q120 each bind substrate; these read TCNR and ETQ. C50 (nucleophile) is an active-site residue. Residue 189–194 participates in NADP(+) binding; the sequence is GAGKMG.

It belongs to the glutamyl-tRNA reductase family. As to quaternary structure, homodimer.

It catalyses the reaction (S)-4-amino-5-oxopentanoate + tRNA(Glu) + NADP(+) = L-glutamyl-tRNA(Glu) + NADPH + H(+). It participates in porphyrin-containing compound metabolism; protoporphyrin-IX biosynthesis; 5-aminolevulinate from L-glutamyl-tRNA(Glu): step 1/2. In terms of biological role, catalyzes the NADPH-dependent reduction of glutamyl-tRNA(Glu) to glutamate 1-semialdehyde (GSA). The chain is Glutamyl-tRNA reductase from Bacillus cereus (strain ATCC 10987 / NRS 248).